The sequence spans 361 residues: MRVDLFDFDLPDERIALRPAEPRDSARLLVIDPNAENSLSDHRVGDLTSFLRAGDALVFNDTKVIPAQLEGIRHRDGAGGQQVSATLHMRTSPSRWKAFAKPGKRIKQGDRISFGHSGESCFLGSLDATVEEKGEAGEVTLLFDLSGPALDEAIAAVGHIPLPPYIAAKRPEDERDRADYQTIYAREEGAVAAPTAGLHFTPGLFEALDRAGIERHFVTLHVGAGTFLPVKADDTADHKMHLESGYVSAEIAARLNAVRERGGRIVCVGTTSLRLIESAAEESGEIMPWAGATGIFITPGYRFKAVDMLMTNFHLPRSTLFMLVSAFAGFETMHAAYKHAISTGYRFYSYGDASLLFRKDR.

Belongs to the QueA family. Monomer.

The protein localises to the cytoplasm. The enzyme catalyses 7-aminomethyl-7-carbaguanosine(34) in tRNA + S-adenosyl-L-methionine = epoxyqueuosine(34) in tRNA + adenine + L-methionine + 2 H(+). It functions in the pathway tRNA modification; tRNA-queuosine biosynthesis. Functionally, transfers and isomerizes the ribose moiety from AdoMet to the 7-aminomethyl group of 7-deazaguanine (preQ1-tRNA) to give epoxyqueuosine (oQ-tRNA). In Rhizobium johnstonii (strain DSM 114642 / LMG 32736 / 3841) (Rhizobium leguminosarum bv. viciae), this protein is S-adenosylmethionine:tRNA ribosyltransferase-isomerase.